Here is a 383-residue protein sequence, read N- to C-terminus: L-lactate dehydrogenase (383 aa).

The FMN hydroxy acid dehydrogenase domain occupies 1 to 380 (MIVSSTTDFR…NETILAERVP (380 aa)). A substrate-binding site is contributed by Tyr-24. Positions 106 and 127 each coordinate FMN. Tyr-129 lines the substrate pocket. Residue Thr-155 participates in FMN binding. Substrate is bound at residue Arg-164. Residue Lys-251 participates in FMN binding. His-275 (proton acceptor) is an active-site residue. Arg-278 lines the substrate pocket. 306-330 (DGGVRSGLDVVRMLALGARGVLIGR) contributes to the FMN binding site.

It belongs to the FMN-dependent alpha-hydroxy acid dehydrogenase family. FMN is required as a cofactor.

The protein localises to the cell inner membrane. It catalyses the reaction (S)-lactate + A = pyruvate + AH2. Functionally, catalyzes the conversion of L-lactate to pyruvate. Is coupled to the respiratory chain. This is L-lactate dehydrogenase from Caulobacter vibrioides (strain ATCC 19089 / CIP 103742 / CB 15) (Caulobacter crescentus).